We begin with the raw amino-acid sequence, 498 residues long: Isocitrate dehydrogenase [NADP], mitochondrial (498 aa).

Residues 164-166 (TIT) and Arg171 each bind NADP(+). Thr166 is a binding site for substrate. Substrate is bound by residues 183 to 189 (SPNGTIR), Arg198, and Arg221. Asp339 is a Mn(2+) binding site. Residue Lys347 coordinates NADP(+). Asp362 provides a ligand contact to Mn(2+). Residues 397–402 (GTVTRH) and Asn415 contribute to the NADP(+) site.

This sequence belongs to the isocitrate and isopropylmalate dehydrogenases family. It depends on Mg(2+) as a cofactor. The cofactor is Mn(2+).

Its subcellular location is the mitochondrion. It catalyses the reaction D-threo-isocitrate + NADP(+) = 2-oxoglutarate + CO2 + NADPH. The protein is Isocitrate dehydrogenase [NADP], mitochondrial (icdA) of Aspergillus niger.